Here is a 210-residue protein sequence, read N- to C-terminus: MSERGLLIVFSGPSGVGKGTVRQEIFSTPDHQFEYSVSMTTRPQRLGEIDGVDYFFRTREEFEELIKQGQMLEYAEYVGNYYGTPLTYVNETLDKGIDVFLEIEVQGALQVKQKVPDGVFIFLTPPDLAELKDRLVGRGTDSQEVIAQRIERAKEEIALMREYDYAVVNDEVKLAAERVKHIIETEHFRVERVIGRYHKMINEELPLPLR.

The region spanning 5–184 (GLLIVFSGPS…AAERVKHIIE (180 aa)) is the Guanylate kinase-like domain. ATP is bound at residue 12-19 (GPSGVGKG).

Belongs to the guanylate kinase family.

The protein resides in the cytoplasm. The catalysed reaction is GMP + ATP = GDP + ADP. Essential for recycling GMP and indirectly, cGMP. This Streptococcus mutans serotype c (strain ATCC 700610 / UA159) protein is Guanylate kinase.